The following is a 238-amino-acid chain: tRNA (guanine-N(1)-)-methyltransferase (238 aa).

Residues glycine 112 and 131–136 (LGDFIL) each bind S-adenosyl-L-methionine.

This sequence belongs to the RNA methyltransferase TrmD family. As to quaternary structure, homodimer.

It is found in the cytoplasm. The enzyme catalyses guanosine(37) in tRNA + S-adenosyl-L-methionine = N(1)-methylguanosine(37) in tRNA + S-adenosyl-L-homocysteine + H(+). Its function is as follows. Specifically methylates guanosine-37 in various tRNAs. The chain is tRNA (guanine-N(1)-)-methyltransferase from Nostoc punctiforme (strain ATCC 29133 / PCC 73102).